A 170-amino-acid chain; its full sequence is Peptidyl-prolyl cis-trans isomerase ESS1 (170 aa).

Residues 9 to 43 (TGLPTPWTVRYSKSKKREYFFNPETKHSQWEEPEG) form the WW domain. Positions 30 to 53 (NPETKHSQWEEPEGTNKDQLHKHL) are disordered. Over residues 32-53 (ETKHSQWEEPEGTNKDQLHKHL) the composition is skewed to basic and acidic residues. Residues 57 to 170 (PVRVRCLHIL…SGVHVIKRVG (114 aa)) enclose the PpiC domain. Serine 161 is subject to Phosphoserine.

The protein belongs to the PpiC/parvulin rotamase family. As to quaternary structure, interacts with the RNA polymerase II largest subunit (RPB1) and with the SIN1-RDP3 HDAC subunit SIN3.

It localises to the cytoplasm. It is found in the nucleus. It catalyses the reaction [protein]-peptidylproline (omega=180) = [protein]-peptidylproline (omega=0). Its activity is regulated as follows. Inhibited by 5-hydroxy-1,4-naphthoquinone (juglone), but not by FK506 or cyclosporin A. Functionally, essential PPIase specific for phosphoserine and phosphothreonine N-terminal to the proline residue. Required for efficient pre-mRNA 3'-end processing and transcription termination, probably by inducing conformational changes by proline-directed isomerization in the C-terminal domain (CTD) of RPB1, thereby altering cofactor binding with the RNA polymerase II transcription complex. Also targets the SIN3-RPD3 histone deacetylase complex (HDAC). The protein is Peptidyl-prolyl cis-trans isomerase ESS1 (ESS1) of Saccharomyces cerevisiae (strain ATCC 204508 / S288c) (Baker's yeast).